Here is a 406-residue protein sequence, read N- to C-terminus: Argininosuccinate synthase (406 aa).

An ATP-binding site is contributed by 9 to 17 (AYSGGLDTS). Residue Tyr-86 participates in L-citrulline binding. Residue Gly-116 coordinates ATP. L-aspartate contacts are provided by Thr-118, Asn-122, and Asp-123. Position 122 (Asn-122) interacts with L-citrulline. Arg-126, Ser-174, Ser-183, Glu-259, and Tyr-271 together coordinate L-citrulline.

This sequence belongs to the argininosuccinate synthase family. Type 1 subfamily. Homotetramer.

Its subcellular location is the cytoplasm. The enzyme catalyses L-citrulline + L-aspartate + ATP = 2-(N(omega)-L-arginino)succinate + AMP + diphosphate + H(+). It functions in the pathway amino-acid biosynthesis; L-arginine biosynthesis; L-arginine from L-ornithine and carbamoyl phosphate: step 2/3. The polypeptide is Argininosuccinate synthase (Geobacillus thermodenitrificans (strain NG80-2)).